The chain runs to 845 residues: Protein kintoun (845 aa).

Basic and acidic residues predominate over residues 362–382 (SKEQAQMHETLRHFSREDSGV). 3 disordered regions span residues 362–420 (SKEQ…PVRH), 575–691 (QALK…SMSD), and 773–845 (AQHR…EMDD). Position 380 is a phosphoserine (serine 380). A compositionally biased stretch (acidic residues) spans 391-400 (PVEEDPDGEL). Positions 584 to 593 (GTKEEEKENQ) are enriched in basic and acidic residues. The segment covering 611–622 (KPGKKQRKRNKK) has biased composition (basic residues). Positions 640–671 (LTKNSELQPKSTFNLPQRKQRSYSECNDSTGG) are enriched in polar residues. Residue serine 779 is modified to Phosphoserine. The segment covering 794–804 (LKQQENQSRNC) has biased composition (polar residues).

Belongs to the PIH1 family. Kintoun subfamily. Interacts with Pp1alpha-96A, Pp1-87B, Pp1-13C and flw.

Its subcellular location is the cytoplasm. Its function is as follows. Required for cytoplasmic pre-assembly of axonemal dyneins, thereby playing a central role in motility in cilia and flagella. Involved in pre-assembly of dynein arm complexes in the cytoplasm before intraflagellar transport loads them for the ciliary compartment. This chain is Protein kintoun, found in Drosophila erecta (Fruit fly).